A 338-amino-acid polypeptide reads, in one-letter code: Lipoate-protein ligase A (338 aa).

The BPL/LPL catalytic domain occupies 29–216; sequence PATQRVLFLW…AFFAHYGERV (188 aa). ATP is bound by residues Arg-71, 76-79, and Lys-134; that span reads GAVF. A (R)-lipoate-binding site is contributed by Lys-134.

This sequence belongs to the LplA family. Monomer.

The protein resides in the cytoplasm. The enzyme catalyses L-lysyl-[lipoyl-carrier protein] + (R)-lipoate + ATP = N(6)-[(R)-lipoyl]-L-lysyl-[lipoyl-carrier protein] + AMP + diphosphate + H(+). It functions in the pathway protein modification; protein lipoylation via exogenous pathway; protein N(6)-(lipoyl)lysine from lipoate: step 1/2. Its pathway is protein modification; protein lipoylation via exogenous pathway; protein N(6)-(lipoyl)lysine from lipoate: step 2/2. Its function is as follows. Catalyzes both the ATP-dependent activation of exogenously supplied lipoate to lipoyl-AMP and the transfer of the activated lipoyl onto the lipoyl domains of lipoate-dependent enzymes. This is Lipoate-protein ligase A from Shigella dysenteriae serotype 1 (strain Sd197).